We begin with the raw amino-acid sequence, 204 residues long: Lysozyme G (204 aa).

The first 19 residues, 1–19 (MHLMLVLLGLAALLGTSQS), serve as a signal peptide directing secretion. 2 cysteine pairs are disulfide-bonded: Cys23–Cys79 and Cys37–Cys48. Active-site residues include Glu92 and Asp105.

This sequence belongs to the glycosyl hydrolase 23 family.

The protein localises to the secreted. The catalysed reaction is Hydrolysis of (1-&gt;4)-beta-linkages between N-acetylmuramic acid and N-acetyl-D-glucosamine residues in a peptidoglycan and between N-acetyl-D-glucosamine residues in chitodextrins.. Has bacteriolytic activity against M.luteus. The protein is Lysozyme G of Dromaius novaehollandiae (Emu).